The following is a 451-amino-acid chain: Probable multidrug resistance protein NorM (451 aa).

A run of 12 helical transmembrane segments spans residues glycine 23–isoleucine 43, alanine 53–leucine 73, leucine 101–proline 121, leucine 132–alanine 152, valine 169–glycine 189, leucine 194–leucine 214, tryptophan 243–methionine 263, threonine 277–valine 297, leucine 316–alanine 336, leucine 355–leucine 375, valine 391–leucine 411, and leucine 422–leucine 442.

The protein belongs to the multi antimicrobial extrusion (MATE) (TC 2.A.66.1) family.

The protein resides in the cell membrane. Multidrug efflux pump. This is Probable multidrug resistance protein NorM (norM) from Deinococcus radiodurans (strain ATCC 13939 / DSM 20539 / JCM 16871 / CCUG 27074 / LMG 4051 / NBRC 15346 / NCIMB 9279 / VKM B-1422 / R1).